Here is a 480-residue protein sequence, read N- to C-terminus: Uronate isomerase (480 aa).

It belongs to the metallo-dependent hydrolases superfamily. Uronate isomerase family.

The enzyme catalyses D-glucuronate = D-fructuronate. The catalysed reaction is aldehydo-D-galacturonate = keto-D-tagaturonate. Its pathway is carbohydrate metabolism; pentose and glucuronate interconversion. This Phenylobacterium zucineum (strain HLK1) protein is Uronate isomerase.